The chain runs to 478 residues: ATP-dependent RNA helicase DDX19A (478 aa).

Ala2 carries the N-acetylalanine modification. Positions 2 to 299 are N-terminal lobe; the sequence is ATDSWALAVD…DPNIIKLKRE (298 aa). A Glycyl lysine isopeptide (Lys-Gly) (interchain with G-Cter in SUMO1); alternate cross-link involves residue Lys26. Residue Lys26 forms a Glycyl lysine isopeptide (Lys-Gly) (interchain with G-Cter in SUMO2); alternate linkage. A disordered region spans residues 34-53; the sequence is TNGVIKTSTTAEKTEEEEKE. Thr42 carries the post-translational modification Phosphothreonine. Residues 54 to 67 form an N-terminal helix region; the sequence is DRAAQSLLNKLIRS. The short motif at 91–119 is the Q motif element; that stretch reads KSFEELRLKPQLLQGVYAMGFNRPSKIQE. ATP-binding positions include Gln118 and 137 to 144; that span reads SQSGTGKT. Positions 124–294 constitute a Helicase ATP-binding domain; that stretch reads MMLAEPPQNL…QKVVPDPNII (171 aa). The short motif at 241–244 is the DEAD box element; it reads DEAD. The C-terminal lobe stretch occupies residues 300 to 478; sequence EETLDTIKQY…DLDEIEKIAN (179 aa). The Helicase C-terminal domain maps to 305–473; it reads TIKQYYVLCN…RLDTDDLDEI (169 aa). The ATP site is built by Arg428 and Arg431.

It belongs to the DEAD box helicase family. DDX19/DBP5 subfamily. As to expression, found in testis, heart, brain, liver, skeletal muscle, and kidney.

It is found in the cytoplasm. The protein resides in the nucleus. It localises to the nucleoplasm. The catalysed reaction is ATP + H2O = ADP + phosphate + H(+). ATP-dependent RNA helicase involved in mRNA export from the nucleus. Rather than unwinding RNA duplexes, DDX19 functions as a remodeler of ribonucleoprotein particles, whereby proteins bound to nuclear mRNA are dissociated and replaced by cytoplasmic mRNA binding proteins. The polypeptide is ATP-dependent RNA helicase DDX19A (Ddx19a) (Mus musculus (Mouse)).